Consider the following 1203-residue polypeptide: Protein patched homolog 2 (1203 aa).

The Cytoplasmic portion of the chain corresponds to 1 to 57 (MTRSPPLRELPPSYTPPARTAAPQILAGSLKAPLWLRAYFQGLLFSLGCGIQRHCGK). The chain crosses the membrane as a helical span at residues 58 to 78 (VLFLGLLAFGALALGLRMAII). Residues 79–392 (ETNLEQLWVE…LDDILHAFSE (314 aa)) are Extracellular-facing. A glycan (N-linked (GlcNAc...) asparagine) is linked at N370. Residues 393 to 413 (VSAARVVGGYLLMLAYACVTM) form a helical membrane-spanning segment. The SSD domain maps to 394-552 (SAARVVGGYL…MLVFPAILSL (159 aa)). At 414–428 (LRWDCAQSQGSVGLA) the chain is on the cytoplasmic side. The helical transmembrane segment at 429–449 (GVLLVALAVASGLGLCALLGI) threads the bilayer. Residues 450 to 457 (TFNAATTQ) lie on the Extracellular side of the membrane. A helical transmembrane segment spans residues 458-478 (VLPFLALGIGVDDVFLLAHAF). Over 479 to 501 (TEALPGTPLQERMGECLQRTGTS) the chain is Cytoplasmic. The chain crosses the membrane as a helical span at residues 502-522 (VVLTSINNMAAFLMAALVPIP). Residues 523–531 (ALRAFSLQA) are Extracellular-facing. A helical membrane pass occupies residues 532 to 552 (AIVVGCTFVAVMLVFPAILSL). The Cytoplasmic portion of the chain corresponds to 553–686 (DLRRRHCQRL…APLLLQSHAK (134 aa)). The chain crosses the membrane as a helical span at residues 687–707 (AIVLVLFGALLGLSLYGATLV). The Extracellular portion of the chain corresponds to 708 to 963 (QDGLALTDVV…WEQYLGLRRC (256 aa)). N812 is a glycosylation site (N-linked (GlcNAc...) asparagine). A helical transmembrane segment spans residues 964–984 (FLLAVCILLVCTFLVCALLLL). Over 985–991 (NPWTAGL) the chain is Cytoplasmic. A helical transmembrane segment spans residues 992–1012 (IVLVLAMMTVELFGIMGFLGI). Position 1013 (K1013) is a topological domain, extracellular. A helical membrane pass occupies residues 1014 to 1034 (LSAIPVVILVASVGIGVEFTV). At 1035-1064 (HVALGFLTTQGSRNLRAAHALEHTFAPVTD) the chain is on the cytoplasmic side. The helical transmembrane segment at 1065 to 1085 (GAISTLLGLLMLAGSHFDFIV) threads the bilayer. The Extracellular segment spans residues 1086–1093 (RYFFAALT). Residues 1094-1114 (VLTLLGLLHGLVLLPVLLSIL) form a helical membrane-spanning segment. Residues 1115-1203 (GPPPEVIQMY…SSRGPGPATG (89 aa)) are Cytoplasmic-facing. The disordered stretch occupies residues 1171 to 1203 (GAYIHPAPDEPPWSPAATSSGNLSSRGPGPATG). The segment covering 1186–1195 (AATSSGNLSS) has biased composition (polar residues).

The protein belongs to the patched family.

The protein localises to the membrane. In terms of biological role, plays a role in the control of cellular growth. May have a role in epidermal development. May act as a receptor for Sonic hedgehog (SHH). This Homo sapiens (Human) protein is Protein patched homolog 2 (PTCH2).